Consider the following 969-residue polypeptide: Translation initiation factor IF-2 (969 aa).

Basic and acidic residues predominate over residues 49-63; sequence HLRKSHGATDGDKRK. 3 disordered regions span residues 49–85, 100–128, and 143–380; these read HLRKSHGATDGDKRKITLTRKHTSEIKQSDATGKART, DDVSDVAEQGQAQVAEADDDAELKRREEE, and LRER…SFQA. Over residues 105 to 114 the composition is skewed to low complexity; sequence VAEQGQAQVA. The segment covering 143-181 has biased composition (basic and acidic residues); sequence LRERQERLEREEAERRAREEAAEAERRRAEEEAAAKRAA. The segment covering 182 to 206 has biased composition (low complexity); that stretch reads AEAAAAQQAAQQAAAAQQAAAPADS. Over residues 209–260 the composition is skewed to basic and acidic residues; that stretch reads DEARAAAERAAQREAAKKAEDAAREAAEKARAEQEEIRKRREAAEAEARAIR. The span at 301–323 shows a compositional bias: low complexity; that stretch reads AQARPAAKKPAAAPAATPAPAGA. Gly residues predominate over residues 353–366; the sequence is SSGGVDRGWRGGPK. Positions 469-638 constitute a tr-type G domain; the sequence is PRPPVVTVMG…LLQAEVLELK (170 aa). Residues 478 to 485 form a G1 region; it reads GHVDHGKT. Residue 478–485 participates in GTP binding; the sequence is GHVDHGKT. The G2 stretch occupies residues 503 to 507; sequence GITQH. The segment at 524–527 is G3; the sequence is DTPG. GTP is bound by residues 524–528 and 578–581; these read DTPGH and NKID. A G4 region spans residues 578 to 581; sequence NKID. A G5 region spans residues 614–616; sequence SAK.

This sequence belongs to the TRAFAC class translation factor GTPase superfamily. Classic translation factor GTPase family. IF-2 subfamily.

It is found in the cytoplasm. Its function is as follows. One of the essential components for the initiation of protein synthesis. Protects formylmethionyl-tRNA from spontaneous hydrolysis and promotes its binding to the 30S ribosomal subunits. Also involved in the hydrolysis of GTP during the formation of the 70S ribosomal complex. The polypeptide is Translation initiation factor IF-2 (Burkholderia multivorans (strain ATCC 17616 / 249)).